The chain runs to 89 residues: RNA-binding protein Hfq (89 aa).

A Sm domain is found at 9-68; that stretch reads EPFLNALRKEKVPVSIYLVNGIKLQGQIESFDQFVILLRNNVNQMVYKHAISTVVPARNV. Positions 70–89 are disordered; the sequence is TAPPVPTETHAQSSEEFGNI. The segment covering 78–89 has biased composition (polar residues); the sequence is THAQSSEEFGNI.

This sequence belongs to the Hfq family. Homohexamer.

Functionally, RNA chaperone that binds small regulatory RNA (sRNAs) and mRNAs to facilitate mRNA translational regulation in response to envelope stress, environmental stress and changes in metabolite concentrations. Also binds with high specificity to tRNAs. This chain is RNA-binding protein Hfq, found in Alkalilimnicola ehrlichii (strain ATCC BAA-1101 / DSM 17681 / MLHE-1).